The primary structure comprises 338 residues: Glycerol-3-phosphate dehydrogenase [NAD(P)+] (338 aa).

Ser14, Tyr15, His35, and Lys109 together coordinate NADPH. Lys109, Gly138, and Thr140 together coordinate sn-glycerol 3-phosphate. An NADPH-binding site is contributed by Ala142. 5 residues coordinate sn-glycerol 3-phosphate: Lys194, Asp247, Ser257, Arg258, and Asn259. The active-site Proton acceptor is Lys194. Arg258 serves as a coordination point for NADPH. Residues Val282 and Glu284 each contribute to the NADPH site.

It belongs to the NAD-dependent glycerol-3-phosphate dehydrogenase family.

The protein localises to the cytoplasm. It carries out the reaction sn-glycerol 3-phosphate + NAD(+) = dihydroxyacetone phosphate + NADH + H(+). It catalyses the reaction sn-glycerol 3-phosphate + NADP(+) = dihydroxyacetone phosphate + NADPH + H(+). It functions in the pathway membrane lipid metabolism; glycerophospholipid metabolism. Catalyzes the reduction of the glycolytic intermediate dihydroxyacetone phosphate (DHAP) to sn-glycerol 3-phosphate (G3P), the key precursor for phospholipid synthesis. In Shewanella sp. (strain MR-4), this protein is Glycerol-3-phosphate dehydrogenase [NAD(P)+].